A 389-amino-acid polypeptide reads, in one-letter code: Chaperone protein DnaJ (389 aa).

A J domain is found at 6–70 (DYYEILGLSK…EKRAQYDRFG (65 aa)). Residues 131-213 (GVRKDIDIPR…CSGAGRVRSR (83 aa)) form a CR-type zinc finger. Zn(2+) is bound by residues Cys144, Cys147, Cys161, Cys164, Cys187, Cys190, Cys201, and Cys204. CXXCXGXG motif repeat units follow at residues 144–151 (CSTCSGTG), 161–168 (CPNCGGTG), 187–194 (CSACHGRG), and 201–208 (CPTCSGAG). A disordered region spans residues 145–167 (STCSGTGAKPGTSPKRCPNCGGT). The disordered stretch occupies residues 351-389 (LSNGKKPEAEERSRSDKQKSEKPRKSKGLFEKVKDAFES). Over residues 355–389 (KKPEAEERSRSDKQKSEKPRKSKGLFEKVKDAFES) the composition is skewed to basic and acidic residues.

Belongs to the DnaJ family. Homodimer. The cofactor is Zn(2+).

The protein localises to the cytoplasm. Its function is as follows. Participates actively in the response to hyperosmotic and heat shock by preventing the aggregation of stress-denatured proteins and by disaggregating proteins, also in an autonomous, DnaK-independent fashion. Unfolded proteins bind initially to DnaJ; upon interaction with the DnaJ-bound protein, DnaK hydrolyzes its bound ATP, resulting in the formation of a stable complex. GrpE releases ADP from DnaK; ATP binding to DnaK triggers the release of the substrate protein, thus completing the reaction cycle. Several rounds of ATP-dependent interactions between DnaJ, DnaK and GrpE are required for fully efficient folding. Also involved, together with DnaK and GrpE, in the DNA replication of plasmids through activation of initiation proteins. This is Chaperone protein DnaJ from Methanosarcina mazei (strain ATCC BAA-159 / DSM 3647 / Goe1 / Go1 / JCM 11833 / OCM 88) (Methanosarcina frisia).